Reading from the N-terminus, the 445-residue chain is Putative H/ACA ribonucleoprotein complex subunit 4 (445 aa).

Residues 1–32 (MGKKDKRSKLEGDDLAEAQQKGSFQLPSSNET) are disordered. Positions 20-32 (QKGSFQLPSSNET) are enriched in polar residues. The Nucleophile role is filled by Asp-113. Residues 284–359 (HKRVVVKDSC…VVAKSKRVIM (76 aa)) form the PUA domain. The tract at residues 386–445 (LDKFGKPNDTTPKSWAKEYVQTSTKKEVKKEETPDEEEEEAPKKKSKKSKKQESSDSDSD) is disordered.

The protein belongs to the pseudouridine synthase TruB family. Component of the small nucleolar ribonucleoprotein particle containing H/ACA-type snoRNAs (H/ACA snoRNPs).

The protein localises to the nucleus. It localises to the nucleolus. It catalyses the reaction a uridine in RNA = a pseudouridine in RNA. Functionally, plays a central role in ribosomal RNA processing. Probable catalytic subunit of H/ACA small nucleolar ribonucleoprotein (H/ACA snoRNP) complex, which catalyzes pseudouridylation of rRNA. This involves the isomerization of uridine such that the ribose is subsequently attached to C5, instead of the normal N1. Pseudouridine ('psi') residues may serve to stabilize the conformation of rRNAs. In Caenorhabditis elegans, this protein is Putative H/ACA ribonucleoprotein complex subunit 4.